Here is a 243-residue protein sequence, read N- to C-terminus: HTH-type transcriptional repressor NagR (243 aa).

An HTH gntR-type domain is found at 9-77; that stretch reads IPIYYQIMEQ…KGRGTFVSKP (69 aa). Residues 37–56 constitute a DNA-binding region (H-T-H motif); the sequence is EREYAEQFGISRMTVRQALS. Alpha-D-glucosamine 6-phosphate is bound by residues 89–90, 133–135, Glu-145, 165–167, Glu-222, and Tyr-228; these read FT, RVR, and SIY. N-acetyl-D-glucosamine 6-phosphate is bound by residues 89–90, 133–135, Glu-145, 165–167, Glu-222, and Tyr-228; these read FT, RVR, and SIY.

In terms of assembly, homodimer. Forms dimers via the C-terminal effector-binding domain. At high concentrations, probably forms polymers along the DNA.

Its activity is regulated as follows. Binding to DNA is allosterically inhibited by an effector molecule. Binding of the effector to the C-terminal domain leads to a conformational change that modulates binding to DNA and thereby regulates transcription of the target genes. Glucosamine-6-phosphate (GlcN6P) and/or N-acetylglucosamine-6-phosphate (GlcNAc6P) are putative effectors of NagR. Binding of GlcNAc6P may prevent the protein-protein interactions responsible for polymerization along the DNA, but not the specific DNA binding. In terms of biological role, main transcriptional repressor of genes involved in N-acetylglucosamine (GlcNAc) transport and utilization. Represses the expression of the nagAB and nagP operons by binding directly within their upstream regions. Binds to the DNA consensus sequence 5'-ATTGGTATAGACAACT-3'. Also acts as a weak repressor of mapB expression. This is HTH-type transcriptional repressor NagR from Bacillus subtilis (strain 168).